The chain runs to 108 residues: L-rhamnose mutarotase (108 aa).

Y18 is a binding site for substrate. H22 serves as the catalytic Proton donor. Residues Y41 and 76 to 77 contribute to the substrate site; that span reads WW.

It belongs to the rhamnose mutarotase family. As to quaternary structure, homodimer.

Its subcellular location is the cytoplasm. The enzyme catalyses alpha-L-rhamnose = beta-L-rhamnose. The protein operates within carbohydrate metabolism; L-rhamnose metabolism. Its function is as follows. Involved in the anomeric conversion of L-rhamnose. The chain is L-rhamnose mutarotase from Paraburkholderia phymatum (strain DSM 17167 / CIP 108236 / LMG 21445 / STM815) (Burkholderia phymatum).